The primary structure comprises 568 residues: 2-succinyl-5-enolpyruvyl-6-hydroxy-3-cyclohexene-1-carboxylate synthase (568 aa).

This sequence belongs to the TPP enzyme family. MenD subfamily. As to quaternary structure, homodimer. Requires Mg(2+) as cofactor. Mn(2+) is required as a cofactor. It depends on thiamine diphosphate as a cofactor.

The catalysed reaction is isochorismate + 2-oxoglutarate + H(+) = 5-enolpyruvoyl-6-hydroxy-2-succinyl-cyclohex-3-ene-1-carboxylate + CO2. The protein operates within quinol/quinone metabolism; 1,4-dihydroxy-2-naphthoate biosynthesis; 1,4-dihydroxy-2-naphthoate from chorismate: step 2/7. It functions in the pathway quinol/quinone metabolism; menaquinone biosynthesis. In terms of biological role, catalyzes the thiamine diphosphate-dependent decarboxylation of 2-oxoglutarate and the subsequent addition of the resulting succinic semialdehyde-thiamine pyrophosphate anion to isochorismate to yield 2-succinyl-5-enolpyruvyl-6-hydroxy-3-cyclohexene-1-carboxylate (SEPHCHC). This is 2-succinyl-5-enolpyruvyl-6-hydroxy-3-cyclohexene-1-carboxylate synthase from Haemophilus influenzae (strain PittEE).